The following is a 129-amino-acid chain: Replication initiation control protein YabA (129 aa).

Residues His103, Cys105, Cys119, and Cys122 each contribute to the Zn(2+) site.

This sequence belongs to the YabA family. As to quaternary structure, homotetramer. Interacts with both DnaA and DnaN, acting as a bridge between these two proteins. The cofactor is Zn(2+).

It localises to the cytoplasm. The protein resides in the nucleoid. Involved in control of chromosome replication initiation. Inhibits the cooperative binding of DnaA to the oriC region, thus negatively regulating initiation of chromosome replication. Inhibits the ability of DnaA-ATP to form a helix on DNA; does not disassemble preformed DnaA-DNA helices. Decreases the residence time of DnaA on the chromosome at its binding sites (oriC, replication forks and promoter-binding sites). Tethers DnaA to the replication machinery via the DNA polymerase beta sliding clamp subunit (dnaN). Associates with oriC and other DnaA targets on the chromosome in a DnaA-dependent manner. In Listeria welshimeri serovar 6b (strain ATCC 35897 / DSM 20650 / CCUG 15529 / CIP 8149 / NCTC 11857 / SLCC 5334 / V8), this protein is Replication initiation control protein YabA.